Consider the following 518-residue polypeptide: MGQVIGFFQSLPNIINEALNIALICVALIAILKGIVNIWKSGLIQLFIFLILAGRSCSHTFQIGRNHEFQSITLNFTQFLGYAPSSCSVNNTHHYFRGPGNVSWGIELTLTNNSVINASNSLKVFTNIHHNITNCVQNIDEQDHLMKWLIETMHLQIMKPGKRLPPILCEKDKGLLIEYNLTNIASREEKHSEYWSQLLYGLSKLLGSSKSLWFDYCQRADCMMQEHSSHLKCNYSECSGHTTFKYLILQNTTWENHCEFNHLNTIHLLMSSTGQSFITRRLQAFLTWTLSDATGNDLPGGYCLEQWAIVWAGIKCFGNTAVAKCNQNHDSEFCDMLRLFDYNRNAIKSLNDQSQSRLNLLTNTINSLISDNLLMKNKLAEIMNIPYCNYTKFWYINDTRTGRHTLPQCWLISNGSYLNETKFRTQWLSESNALYTEMLTEDYDKRQGSTPLSLVDLCFWSTLFYVTTLFAHLVGFPTHRHILDGPCPKPHRLTKKGICSCGHFGIPGKPVRWVKRSR.

A lipid anchor (N-myristoyl glycine; by host) is attached at glycine 2. At 2 to 17 the chain is on the extracellular side; sequence GQVIGFFQSLPNIINE. A helical transmembrane segment spans residues 18-33; that stretch reads ALNIALICVALIAILK. Topologically, residues 34 to 58 are cytoplasmic; that stretch reads GIVNIWKSGLIQLFIFLILAGRSCS. Cysteine 57 provides a ligand contact to Zn(2+). At 59 to 456 the chain is on the extracellular side; the sequence is HTFQIGRNHE…QGSTPLSLVD (398 aa). Intrachain disulfides connect cysteine 87–cysteine 258, cysteine 303–cysteine 316, cysteine 325–cysteine 334, and cysteine 388–cysteine 409. N-linked (GlcNAc...) asparagine; by host glycosylation is found at asparagine 90, asparagine 112, asparagine 127, asparagine 180, and asparagine 251. 4 N-linked (GlcNAc...) asparagine; by host glycosylation sites follow: asparagine 389, asparagine 397, asparagine 414, and asparagine 419. The chain crosses the membrane as a helical span at residues 457-477; sequence LCFWSTLFYVTTLFAHLVGFP. Residues 478 to 518 lie on the Cytoplasmic side of the membrane; the sequence is THRHILDGPCPKPHRLTKKGICSCGHFGIPGKPVRWVKRSR. Zn(2+)-binding residues include histidine 479, histidine 481, cysteine 487, histidine 491, cysteine 499, and cysteine 501.

Belongs to the arenaviridae GPC protein family. As to quaternary structure, interacts with glycoprotein G2. Part of the GP complex (GP-C) together with glycoprotein G1 and glycoprotein G2. The GP-complex interacts with protein Z, which interacts with ribonucleocapsid; these interactions may induce virion budding. In terms of assembly, homotrimer; disulfide-linked. In pre-fusion state, G1 homotrimers bind G2 homotrimers via ionic interactions. Part of the GP complex (GP-C) together with glycoprotein G2 and the stable signal peptide. The GP-complex interacts with protein Z, which interacts with ribonucleocapsid; these interactions may induce virion budding. Homotrimer. Interacts with the stable signal peptide. In pre-fusion state, G2 homotrimers bind G1 homotrimers via ionic interactions. Part of the GP complex (GP-C) together with glycoprotein G1 and the stable signal peptide. Acidification in the endosome triggers rearrangements, which ultimately leads to a 6 helix bundle formed by the two heptad repeat domains (HR1 and HR2) in post-fusion state. The GP-complex interacts with protein Z, which interacts with ribonucleocapsid; these interactions may induce virion budding. Post-translationally, specific enzymatic cleavages in vivo yield mature proteins. GP-C polyprotein is cleaved in the endoplasmic reticulum by the host protease MBTPS1. Only cleaved glycoprotein is incorporated into virions. In terms of processing, the SSP remains stably associated with the GP complex following cleavage by signal peptidase and plays crucial roles in the trafficking of GP through the secretory pathway. Myristoylation is necessary for GP2-mediated fusion activity.

The protein resides in the virion membrane. It localises to the host endoplasmic reticulum membrane. It is found in the host Golgi apparatus membrane. Its subcellular location is the host cell membrane. Its function is as follows. Functions as a cleaved signal peptide that is retained as the third component of the GP complex (GP-C). Helps to stabilize the spike complex in its native conformation. The SSP is required for efficient glycoprotein expression, post-translational maturation cleavage of G1 and G2, glycoprotein transport to the cell surface plasma membrane, formation of infectious virus particles, and acid pH-dependent glycoprotein-mediated cell fusion. Forms the virion spikes together with glycoprotein G2. The glycoprotein spike trimers are connected to the underlying matrix. Mediates virus attachment to host receptor alpha-dystroglycan DAG1. This attachment induces virion internalization predominantly through clathrin- and caveolin-independent endocytosis. In terms of biological role, forms the virion spikes together with glycoprotein G1. The glycoprotein spike trimers are connected to the underlying matrix. Class I viral fusion protein that directs fusion of viral and host endosomal membranes, leading to delivery of the nucleocapsid into the cytoplasm. Membrane fusion is mediated by irreversible conformational changes induced by acidification. This is Pre-glycoprotein polyprotein GP complex from Bolomys (OLVV).